The sequence spans 411 residues: Bestrophin homolog 26 (411 aa).

Helical transmembrane passes span phenylalanine 30–isoleucine 50, serine 73–valine 93, isoleucine 235–valine 255, and threonine 272–methionine 292.

It belongs to the anion channel-forming bestrophin (TC 1.A.46) family. Calcium-sensitive chloride channel subfamily. As to quaternary structure, forms oligomers.

Its subcellular location is the cell membrane. Forms chloride channels. In Caenorhabditis elegans, this protein is Bestrophin homolog 26 (best-26).